Reading from the N-terminus, the 331-residue chain is Serine/threonine-protein phosphatase PP1 isozyme 7 (331 aa).

At M1 the chain carries N-acetylmethionine. 4 residues coordinate Mn(2+): D60, H62, D88, and N120. The Proton donor role is filled by H121. The Mn(2+) site is built by H169 and H244.

This sequence belongs to the PPP phosphatase family. PP-1 subfamily. Mn(2+) serves as cofactor. In terms of tissue distribution, expressed in roots, rosettes and flowers.

It localises to the nucleus. The protein resides in the cytoplasm. The enzyme catalyses O-phospho-L-seryl-[protein] + H2O = L-seryl-[protein] + phosphate. It carries out the reaction O-phospho-L-threonyl-[protein] + H2O = L-threonyl-[protein] + phosphate. Its activity is regulated as follows. Phosphatase activity is strongly reduced by the protein phosphatase inhibitor 2 (I-2). Functionally, serine/threonine-protein phosphatase that possesses phosphatase activity toward para-nitrophenyl phosphate (pNPP) in vitro. The polypeptide is Serine/threonine-protein phosphatase PP1 isozyme 7 (Arabidopsis thaliana (Mouse-ear cress)).